Consider the following 476-residue polypeptide: mRNA cap guanine-N(7) methyltransferase (476 aa).

Over residues 1 to 14 (MANSTKAEEYEKMS) the composition is skewed to basic and acidic residues. Positions 1 to 128 (MANSTKAEEY…TGDGTQNKRK (128 aa)) are disordered. A compositionally biased stretch (polar residues) spans 20 to 50 (ASVNSEAESSFSINENTTASGTGLSGKTSVC). A phosphoserine mark is found at serine 24, serine 28, and serine 29. 3 stretches are compositionally biased toward basic and acidic residues: residues 54 to 68 (DTAR…DLVK), 84 to 93 (LDPEIVPEEK), and 107 to 117 (RETEDVPKDEY). At serine 118 the chain carries Phosphoserine. Residues 126-128 (KRK) carry the Nuclear localization signal motif. Residues 167–475 (SRIFYLRNFN…IYLVFAFEKQ (309 aa)) enclose the mRNA cap 0 methyltransferase domain. An mRNA-binding site is contributed by 176 to 177 (NN). Residues lysine 180, glycine 205, aspartate 227, aspartate 261, glutamine 284, and tyrosine 289 each coordinate S-adenosyl-L-methionine.

It belongs to the class I-like SAM-binding methyltransferase superfamily. mRNA cap 0 methyltransferase family. Interacts with importin alpha, leading to stimulate both RNA-binding and methyltransferase activity. Interaction with importin alpha and beta is required for its nuclear localization, importin beta dissociating in response to RanGTP, allowing RNMT-importin alpha to bind RNA substrates. Interacts with elongating form of polymerase II and RNGTT. Interacts with RAMAC, this interaction significantly enhances RNA-binding and cap methyltransferase activity.

The protein resides in the nucleus. It catalyses the reaction a 5'-end (5'-triphosphoguanosine)-ribonucleoside in mRNA + S-adenosyl-L-methionine = a 5'-end (N(7)-methyl 5'-triphosphoguanosine)-ribonucleoside in mRNA + S-adenosyl-L-homocysteine. Methyltransferase activity is activated by RAMAC. Its function is as follows. Catalytic subunit of the mRNA-capping methyltransferase RNMT:RAMAC complex that methylates the N7 position of the added guanosine to the 5'-cap structure of mRNAs. Binds RNA containing 5'-terminal GpppC. The chain is mRNA cap guanine-N(7) methyltransferase (RNMT) from Macaca fascicularis (Crab-eating macaque).